Consider the following 487-residue polypeptide: Kynureninase 1 (487 aa).

Pyridoxal 5'-phosphate is bound by residues L147, T148, 175–178 (FPSD), S232, D261, H264, and Y286. The residue at position 287 (K287) is an N6-(pyridoxal phosphate)lysine. Pyridoxal 5'-phosphate-binding residues include W327 and N355.

Belongs to the kynureninase family. In terms of assembly, homodimer. The cofactor is pyridoxal 5'-phosphate.

The protein localises to the cytoplasm. It carries out the reaction L-kynurenine + H2O = anthranilate + L-alanine + H(+). The catalysed reaction is 3-hydroxy-L-kynurenine + H2O = 3-hydroxyanthranilate + L-alanine + H(+). It participates in amino-acid degradation; L-kynurenine degradation; L-alanine and anthranilate from L-kynurenine: step 1/1. The protein operates within cofactor biosynthesis; NAD(+) biosynthesis; quinolinate from L-kynurenine: step 2/3. Catalyzes the cleavage of L-kynurenine (L-Kyn) and L-3-hydroxykynurenine (L-3OHKyn) into anthranilic acid (AA) and 3-hydroxyanthranilic acid (3-OHAA), respectively. This chain is Kynureninase 1 (bna5-1), found in Aspergillus oryzae (strain ATCC 42149 / RIB 40) (Yellow koji mold).